Reading from the N-terminus, the 81-residue chain is Exodeoxyribonuclease 7 small subunit (81 aa).

This sequence belongs to the XseB family. As to quaternary structure, heterooligomer composed of large and small subunits.

The protein resides in the cytoplasm. It catalyses the reaction Exonucleolytic cleavage in either 5'- to 3'- or 3'- to 5'-direction to yield nucleoside 5'-phosphates.. In terms of biological role, bidirectionally degrades single-stranded DNA into large acid-insoluble oligonucleotides, which are then degraded further into small acid-soluble oligonucleotides. The sequence is that of Exodeoxyribonuclease 7 small subunit from Pseudomonas syringae pv. syringae (strain B728a).